Consider the following 373-residue polypeptide: SWI/SNF-related matrix-associated actin-dependent regulator of chromatin subfamily B member 1-A (373 aa).

The DNA-binding stretch occupies residues 1-101 (MALSKTYGQK…DEKYKAVSIS (101 aa)).

The protein belongs to the SNF5 family. As to quaternary structure, component of the multiprotein chromatin-remodeling complexes SWI/SNF. Component of neural progenitors-specific chromatin remodeling complex (npBAF complex) and the neuron-specific chromatin remodeling complex (nBAF complex). Component of the BAF (SWI/SNF) chromatin remodeling complex. Component of the SWI/SNF-B (PBAF) chromatin remodeling complex. Binds to double-stranded DNA.

The protein resides in the nucleus. Its function is as follows. Involved in chromatin-remodeling. Core component of the BAF (SWI/SNF) complex. This ATP-dependent chromatin-remodeling complex plays important roles in cell proliferation and differentiation, in cellular antiviral activities and inhibition of tumor formation. Belongs to the neural progenitors-specific chromatin remodeling complex (npBAF complex) and the neuron-specific chromatin remodeling complex (nBAF complex) and may play a role in neural development. The sequence is that of SWI/SNF-related matrix-associated actin-dependent regulator of chromatin subfamily B member 1-A (smarcb1a) from Danio rerio (Zebrafish).